The following is a 252-amino-acid chain: Probable transcriptional regulatory protein CE1776 (252 aa).

Residues 1-22 (MAGHSKWATTKHKKAANDAKRG) are disordered.

This sequence belongs to the TACO1 family.

It localises to the cytoplasm. The polypeptide is Probable transcriptional regulatory protein CE1776 (Corynebacterium efficiens (strain DSM 44549 / YS-314 / AJ 12310 / JCM 11189 / NBRC 100395)).